The following is a 207-amino-acid chain: NAD--protein ADP-ribosyltransferase modB (207 aa).

Arginine 73 contacts NAD(+). Glutamate 173 is a catalytic residue.

The protein belongs to the Tevenvirinae NAD--protein ADP-ribosyltransferase modA family.

Its subcellular location is the virion. It catalyses the reaction L-arginyl-[protein] + NAD(+) = N(omega)-(ADP-D-ribosyl)-L-arginyl-[protein] + nicotinamide + H(+). Its function is as follows. ADP-ribosyltransferase that regulates transcription by ADP-ribosylation of host ribosomal protein S1. Additional identified targets include proteins involved in either translation or cellular metabolism such as elongation factor-Tu or trigger factor. Also reprograms the host's gene-expression system by RNAylating host ribosomal protein S1. ModB can attach NAD-capped RNAs to target proteins post-transcriptionally resulting in covalent RNA-protein conjugates. The sequence is that of NAD--protein ADP-ribosyltransferase modB from Enterobacteria phage T4 (Bacteriophage T4).